A 1322-amino-acid chain; its full sequence is Serine/threonine-protein phosphatase UIS2 (1322 aa).

The signal sequence occupies residues 1–22 (MNISKFFLIFIPLVLFKYPANN). Residues 1–535 (MNISKFFLIF…NELKSTSNAM (535 aa)) form an interaction with phosphorylated eIF2alpha region. Composition is skewed to basic and acidic residues over residues 267–279 (EKSA…KELN) and 288–326 (NSKK…KSEN). Disordered regions lie at residues 267-326 (EKSA…KSEN), 613-646 (NTNT…SENN), 1066-1087 (NETP…IQPN), and 1170-1196 (EVPD…NKDD). Positions 631–646 (NNYTDGNEGNNNSENN) are enriched in low complexity.

Requires Mn(2+) as cofactor.

The enzyme catalyses O-phospho-L-seryl-[protein] + H2O = L-seryl-[protein] + phosphate. Protein phosphatase which dephosphorylates 'Ser-59' of translation factor eIF2alpha during the liver stage, thus enabling protein translation. The polypeptide is Serine/threonine-protein phosphatase UIS2 (Plasmodium berghei (strain Anka)).